The sequence spans 167 residues: Large ribosomal subunit protein uL10 (167 aa).

The protein belongs to the universal ribosomal protein uL10 family. As to quaternary structure, part of the ribosomal stalk of the 50S ribosomal subunit. The N-terminus interacts with L11 and the large rRNA to form the base of the stalk. The C-terminus forms an elongated spine to which L12 dimers bind in a sequential fashion forming a multimeric L10(L12)X complex.

In terms of biological role, forms part of the ribosomal stalk, playing a central role in the interaction of the ribosome with GTP-bound translation factors. The polypeptide is Large ribosomal subunit protein uL10 (Erwinia tasmaniensis (strain DSM 17950 / CFBP 7177 / CIP 109463 / NCPPB 4357 / Et1/99)).